The following is a 350-amino-acid chain: Purine-rich element-binding protein gamma (350 aa).

2 disordered regions span residues 1–59 (MERA…GTSE) and 136–172 (GHRQ…HPHS). Over residues 9–27 (GGGSGGGRGRGGKNVGGPG) the composition is skewed to gly residues. A compositionally biased stretch (polar residues) spans 47–59 (ASATPNQSGGTSE). A DNA-binding region spans residues 54-296 (SGGTSEIQEL…GIFLKVSEVR (243 aa)). Basic and acidic residues predominate over residues 137–149 (HRQEHGQSKEQVS). Residues serine 163, serine 166, and serine 342 each carry the phosphoserine modification.

This sequence belongs to the PUR DNA-binding protein family. In terms of tissue distribution, isoform 1 is expressed in testis. Isoform 2 is expressed in blastocyst and kidney.

Its subcellular location is the nucleus. In Mus musculus (Mouse), this protein is Purine-rich element-binding protein gamma (Purg).